A 357-amino-acid polypeptide reads, in one-letter code: Phosphoribosylformylglycinamidine cyclo-ligase (357 aa).

Belongs to the AIR synthase family.

It localises to the cytoplasm. It carries out the reaction 2-formamido-N(1)-(5-O-phospho-beta-D-ribosyl)acetamidine + ATP = 5-amino-1-(5-phospho-beta-D-ribosyl)imidazole + ADP + phosphate + H(+). Its pathway is purine metabolism; IMP biosynthesis via de novo pathway; 5-amino-1-(5-phospho-D-ribosyl)imidazole from N(2)-formyl-N(1)-(5-phospho-D-ribosyl)glycinamide: step 2/2. This chain is Phosphoribosylformylglycinamidine cyclo-ligase, found in Rhizobium leguminosarum.